The chain runs to 214 residues: Epoxide hydrolase EphH (214 aa).

S28 functions as the Nucleophile in the catalytic mechanism. Residues D156 and H186 each act as charge relay system in the active site.

Belongs to the AB hydrolase superfamily.

It catalyses the reaction an epoxide + H2O = an ethanediol. Inhibited by AUDA, a known epoxide hydrolase inhibitor. Functionally, catalyzes the hydrolysis of epoxide-containing substrates. In vitro, catalyzes the hydrolysis of the synthetic compounds PHOME and styrene oxide. Plays an essential role in subverting phagosomal acidification. Plays a major role in the survival of M.tuberculosis (Mtb) during in vitro acidic stress and protects Mtb in response to phagosomal acidification inside macrophages. Also supports Mtb growth under the nutrient-deprived condition at pH 7.0. The polypeptide is Epoxide hydrolase EphH (Mycobacterium tuberculosis (strain ATCC 25618 / H37Rv)).